Consider the following 216-residue polypeptide: Inner membrane assembly complex subunit 22 (216 aa).

A mitochondrion-targeting transit peptide spans 1-26 (MFMARQVLRNGLFLRSLAPIKITART). Residues 27–43 (VASANAGIKRKSRFDKT) are Mitochondrial matrix-facing. A helical membrane pass occupies residues 44–63 (MIKPLLLVMIFGSILNAVIA). Positions 64-93 (EKRNIIDMERKYKLKLDKLKELIRRVHDNN) form a coiled coil. Residues 64–216 (EKRNIIDMER…KEHDKIPKFL (153 aa)) are Mitochondrial intermembrane-facing.

As to quaternary structure, component of the inner membrane assembly (INA) complex, composed of INA17 and INA22. Interacts with a subset of F(1)F(0)-ATP synthase subunits of the F(1)-domain and the peripheral stalk.

It localises to the mitochondrion inner membrane. In terms of biological role, component of the INA complex (INAC) that promotes the biogenesis of mitochondrial F(1)F(0)-ATP synthase. INAC facilitates the assembly of the peripheral stalk and promotes the assembly of the catalytic F(1)-domain with the membrane-embedded F(0)-domain. The sequence is that of Inner membrane assembly complex subunit 22 from Saccharomyces cerevisiae (strain ATCC 204508 / S288c) (Baker's yeast).